Consider the following 165-residue polypeptide: ATP synthase subunit b (165 aa).

Residues 10–30 (LIFWMLLSFGIVFAVLAKYGF) traverse the membrane as a helical segment.

This sequence belongs to the ATPase B chain family. In terms of assembly, F-type ATPases have 2 components, F(1) - the catalytic core - and F(0) - the membrane proton channel. F(1) has five subunits: alpha(3), beta(3), gamma(1), delta(1), epsilon(1). F(0) has three main subunits: a(1), b(2) and c(10-14). The alpha and beta chains form an alternating ring which encloses part of the gamma chain. F(1) is attached to F(0) by a central stalk formed by the gamma and epsilon chains, while a peripheral stalk is formed by the delta and b chains.

It localises to the cell inner membrane. In terms of biological role, f(1)F(0) ATP synthase produces ATP from ADP in the presence of a proton or sodium gradient. F-type ATPases consist of two structural domains, F(1) containing the extramembraneous catalytic core and F(0) containing the membrane proton channel, linked together by a central stalk and a peripheral stalk. During catalysis, ATP synthesis in the catalytic domain of F(1) is coupled via a rotary mechanism of the central stalk subunits to proton translocation. Functionally, component of the F(0) channel, it forms part of the peripheral stalk, linking F(1) to F(0). The protein is ATP synthase subunit b of Bacteroides fragilis (strain ATCC 25285 / DSM 2151 / CCUG 4856 / JCM 11019 / LMG 10263 / NCTC 9343 / Onslow / VPI 2553 / EN-2).